The chain runs to 210 residues: Probable GTP-binding protein EngB (210 aa).

Positions 25 to 199 constitute an EngB-type G domain; it reads CGIEVAFAGR…RQKLDSWFSE (175 aa). GTP is bound by residues 33 to 40, 60 to 64, 78 to 81, 145 to 148, and 178 to 180; these read GRSNAGKS, GRTQL, DLPG, TKAD, and FSS. Residues S40 and T62 each contribute to the Mg(2+) site.

This sequence belongs to the TRAFAC class TrmE-Era-EngA-EngB-Septin-like GTPase superfamily. EngB GTPase family. The cofactor is Mg(2+).

Necessary for normal cell division and for the maintenance of normal septation. The chain is Probable GTP-binding protein EngB from Salmonella paratyphi C (strain RKS4594).